A 618-amino-acid polypeptide reads, in one-letter code: UvrABC system protein C (618 aa).

Residues 20–98 enclose the GIY-YIG domain; the sequence is TAPGVYRMYA…IKSLSPRYNV (79 aa). The 36-residue stretch at 207–242 folds into the UVR domain; the sequence is DQLGEEIMQSMQQASEALEFERAARLRDLLSSLRSM.

The protein belongs to the UvrC family. As to quaternary structure, interacts with UvrB in an incision complex.

It is found in the cytoplasm. The UvrABC repair system catalyzes the recognition and processing of DNA lesions. UvrC both incises the 5' and 3' sides of the lesion. The N-terminal half is responsible for the 3' incision and the C-terminal half is responsible for the 5' incision. This chain is UvrABC system protein C, found in Xanthomonas oryzae pv. oryzae (strain MAFF 311018).